A 414-amino-acid polypeptide reads, in one-letter code: Histidinol dehydrogenase (414 aa).

Residues Tyr-116, Gln-177, and Asn-200 each contribute to the NAD(+) site. Residues Thr-223, Gln-245, and His-248 each coordinate substrate. Residues Gln-245 and His-248 each contribute to the Zn(2+) site. Catalysis depends on proton acceptor residues Glu-313 and His-314. Residues His-314, Asp-347, Glu-401, and His-406 each coordinate substrate. Asp-347 contacts Zn(2+). His-406 lines the Zn(2+) pocket.

This sequence belongs to the histidinol dehydrogenase family. It depends on Zn(2+) as a cofactor.

The enzyme catalyses L-histidinol + 2 NAD(+) + H2O = L-histidine + 2 NADH + 3 H(+). It participates in amino-acid biosynthesis; L-histidine biosynthesis; L-histidine from 5-phospho-alpha-D-ribose 1-diphosphate: step 9/9. Its function is as follows. Catalyzes the sequential NAD-dependent oxidations of L-histidinol to L-histidinaldehyde and then to L-histidine. This chain is Histidinol dehydrogenase, found in Staphylococcus epidermidis (strain ATCC 35984 / DSM 28319 / BCRC 17069 / CCUG 31568 / BM 3577 / RP62A).